The following is a 648-amino-acid chain: ATP-dependent DNA helicase Q1 (648 aa).

Positions 100-275 constitute a Helicase ATP-binding domain; that stretch reads INVTMARKDI…QKILCVGKCL (176 aa). 113 to 120 contacts ATP; the sequence is MPTGGGKS. A DEVH box motif is present at residues 219 to 222; the sequence is DEVH. The Helicase C-terminal domain maps to 299 to 451; that stretch reads DFTEDIVKLI…EMVSYCQNVS (153 aa). Residues Cys-453, Cys-471, Cys-475, and Cys-478 each coordinate Zn(2+). An N6-acetyllysine mark is found at Lys-514 and Lys-522. Phosphoserine is present on Ser-597. The segment at 601–648 is disordered; it reads ALSEARQVEQVDSKGEEQSSGNSQKSKSRLQPSGSKNAGAKKRKLDDA. Residues 606–617 are compositionally biased toward basic and acidic residues; sequence RQVEQVDSKGEE. Residues 618–636 show a composition bias toward polar residues; the sequence is QSSGNSQKSKSRLQPSGSK. Ser-633 carries the phosphoserine modification. The span at 639–648 shows a compositional bias: basic residues; that stretch reads GAKKRKLDDA.

Belongs to the helicase family. RecQ subfamily. As to quaternary structure, may form homodimers or higher order oligomers. Interacts with EXO1. Interacts with MLH1. Interacts with PARP1. Mg(2+) is required as a cofactor. It depends on Mn(2+) as a cofactor. Requires Zn(2+) as cofactor. In terms of tissue distribution, expressed in all tissues examined. As to expression, only expressed in spermatocytes. Expression increases at pachytene (17 days old) and decreases after completion of meiosis II (7 weeks old).

The protein localises to the nucleus. The catalysed reaction is Couples ATP hydrolysis with the unwinding of duplex DNA by translocating in the 3'-5' direction.. It catalyses the reaction ATP + H2O = ADP + phosphate + H(+). It carries out the reaction dATP + H2O = dADP + phosphate + H(+). In terms of biological role, DNA helicase that plays a role in DNA damage repair and genome stability. Exhibits a magnesium- and ATP-dependent DNA-helicase activity that unwinds single- and double-stranded DNA in a 3'-5' direction. Plays a role in restoring regressed replication forks. Required to restart stalled replication forks induced by abortive topoisomerase 1 and 2 lesions. May play a role in the repair of DNA that is damaged by ultraviolet light or other mutagens. This chain is ATP-dependent DNA helicase Q1 (Recql), found in Mus musculus (Mouse).